Reading from the N-terminus, the 353-residue chain is Photosystem II protein D1 (353 aa).

Residue threonine 2 is modified to N-acetylthreonine. Threonine 2 carries the phosphothreonine modification. Transmembrane regions (helical) follow at residues tyrosine 29–serine 46, histidine 118–leucine 133, and tryptophan 142–alanine 156. Chlorophyll a is bound at residue histidine 118. Residue tyrosine 126 participates in pheophytin a binding. 2 residues coordinate [CaMn4O5] cluster: aspartate 170 and glutamate 189. A helical transmembrane segment spans residues phenylalanine 197–leucine 218. Position 198 (histidine 198) interacts with chlorophyll a. Residues histidine 215 and serine 264–phenylalanine 265 each bind a quinone. Residue histidine 215 participates in Fe cation binding. Residue histidine 272 participates in Fe cation binding. Residues phenylalanine 274–leucine 288 form a helical membrane-spanning segment. Positions 332, 333, 342, and 344 each coordinate [CaMn4O5] cluster. A propeptide spanning residues alanine 345–glycine 353 is cleaved from the precursor.

It belongs to the reaction center PufL/M/PsbA/D family. As to quaternary structure, PSII is composed of 1 copy each of membrane proteins PsbA, PsbB, PsbC, PsbD, PsbE, PsbF, PsbH, PsbI, PsbJ, PsbK, PsbL, PsbM, PsbT, PsbX, PsbY, PsbZ, Psb30/Ycf12, at least 3 peripheral proteins of the oxygen-evolving complex and a large number of cofactors. It forms dimeric complexes. The cofactor is The D1/D2 heterodimer binds P680, chlorophylls that are the primary electron donor of PSII, and subsequent electron acceptors. It shares a non-heme iron and each subunit binds pheophytin, quinone, additional chlorophylls, carotenoids and lipids. D1 provides most of the ligands for the Mn4-Ca-O5 cluster of the oxygen-evolving complex (OEC). There is also a Cl(-1) ion associated with D1 and D2, which is required for oxygen evolution. The PSII complex binds additional chlorophylls, carotenoids and specific lipids.. Post-translationally, tyr-161 forms a radical intermediate that is referred to as redox-active TyrZ, YZ or Y-Z. In terms of processing, C-terminally processed by CTPA; processing is essential to allow assembly of the oxygen-evolving complex and thus photosynthetic growth.

It is found in the plastid. It localises to the chloroplast thylakoid membrane. The enzyme catalyses 2 a plastoquinone + 4 hnu + 2 H2O = 2 a plastoquinol + O2. Functionally, photosystem II (PSII) is a light-driven water:plastoquinone oxidoreductase that uses light energy to abstract electrons from H(2)O, generating O(2) and a proton gradient subsequently used for ATP formation. It consists of a core antenna complex that captures photons, and an electron transfer chain that converts photonic excitation into a charge separation. The D1/D2 (PsbA/PsbD) reaction center heterodimer binds P680, the primary electron donor of PSII as well as several subsequent electron acceptors. In Citrus sinensis (Sweet orange), this protein is Photosystem II protein D1.